Reading from the N-terminus, the 68-residue chain is SERF-like protein YDL085C-A (68 aa).

Basic and acidic residues-rich tracts occupy residues 1–43 (MARG…EILR) and 50–68 (DARREAEKLEKLKAEKTRR). Positions 1–68 (MARGNQRDLA…EKLKAEKTRR (68 aa)) are disordered. Ser37 carries the phosphoserine modification.

Belongs to the SERF family.

It localises to the cytoplasm. Its subcellular location is the nucleus. This is SERF-like protein YDL085C-A from Saccharomyces cerevisiae (strain ATCC 204508 / S288c) (Baker's yeast).